Consider the following 260-residue polypeptide: Protein SVS1 (260 aa).

A signal peptide spans 1 to 19; the sequence is MIFKILCSLLLVTSNFASA. N-linked (GlcNAc...) asparagine glycosylation is found at Asn23, Asn249, and Asn256.

Functionally, required for vanadate resistance. The polypeptide is Protein SVS1 (SVS1) (Saccharomyces cerevisiae (strain ATCC 204508 / S288c) (Baker's yeast)).